The sequence spans 373 residues: Unsaturated rhamnogalacturonyl hydrolase YteR (373 aa).

Residues 40–41 (HY), Asp88, and 132–136 (HKDGY) each bind substrate. The active-site Proton donor is Asp143. Substrate is bound by residues 213–217 (RSIGW) and 333–334 (TS).

This sequence belongs to the glycosyl hydrolase 105 family. In terms of assembly, monomer.

Its subcellular location is the cytoplasm. It catalyses the reaction 2-O-(4-deoxy-beta-L-threo-hex-4-enopyranuronosyl)-alpha-L-rhamnose + H2O = 5-dehydro-4-deoxy-D-glucuronate + L-rhamnopyranose. Its function is as follows. Catalyzes the hydrolysis of unsaturated rhamnogalacturonan disaccharide to yield unsaturated D-galacturonic acid and L-rhamnose. It cannot act on unsaturated glucuronyl hydrolase (UGL) substrates containing unsaturated D-glucuronic acid at the non-reducing terminus, although the active pockets of YesR and UGL are very similar. The protein is Unsaturated rhamnogalacturonyl hydrolase YteR (yteR) of Bacillus subtilis (strain 168).